Consider the following 291-residue polypeptide: ATP synthase gamma chain (291 aa).

This sequence belongs to the ATPase gamma chain family. In terms of assembly, F-type ATPases have 2 components, CF(1) - the catalytic core - and CF(0) - the membrane proton channel. CF(1) has five subunits: alpha(3), beta(3), gamma(1), delta(1), epsilon(1). CF(0) has three main subunits: a, b and c.

The protein resides in the cell inner membrane. Produces ATP from ADP in the presence of a proton gradient across the membrane. The gamma chain is believed to be important in regulating ATPase activity and the flow of protons through the CF(0) complex. This Ruegeria sp. (strain TM1040) (Silicibacter sp.) protein is ATP synthase gamma chain.